The chain runs to 439 residues: DNA primase DnaG (439 aa).

The 75-residue stretch at 169-243 folds into the Toprim domain; that stretch reads DSIIVVEGRA…DIDYVARAPY (75 aa). Residues Glu-175, Asp-217, and Asp-219 each contribute to the Mg(2+) site.

This sequence belongs to the archaeal DnaG primase family. As to quaternary structure, forms a ternary complex with MCM helicase and DNA. Requires Mg(2+) as cofactor.

The catalysed reaction is ssDNA + n NTP = ssDNA/pppN(pN)n-1 hybrid + (n-1) diphosphate.. Its function is as follows. RNA polymerase that catalyzes the synthesis of short RNA molecules used as primers for DNA polymerase during DNA replication. This is DNA primase DnaG from Methanococcus maripaludis (strain C7 / ATCC BAA-1331).